The sequence spans 206 residues: 2,3-bisphosphoglycerate-dependent phosphoglycerate mutase (206 aa).

Substrate is bound by residues 9–16, 22–23, Arg-61, 88–91, Lys-99, 115–116, and 159–160; these read RHGQSEWN, TG, ERNY, RR, and GN. The active-site Tele-phosphohistidine intermediate is the His-10. Glu-88 (proton donor/acceptor) is an active-site residue.

Belongs to the phosphoglycerate mutase family. BPG-dependent PGAM subfamily. As to quaternary structure, homodimer.

The catalysed reaction is (2R)-2-phosphoglycerate = (2R)-3-phosphoglycerate. The protein operates within carbohydrate degradation; glycolysis; pyruvate from D-glyceraldehyde 3-phosphate: step 3/5. Its function is as follows. Catalyzes the interconversion of 2-phosphoglycerate and 3-phosphoglycerate. The sequence is that of 2,3-bisphosphoglycerate-dependent phosphoglycerate mutase from Bartonella tribocorum (strain CIP 105476 / IBS 506).